A 229-amino-acid chain; its full sequence is Deleted in azoospermia-like (229 aa).

Residues 47-128 (NTLFVGGIDM…PAIMKERSSR (82 aa)) enclose the RRM domain. The region spanning 172-198 (PYSYSSPPGIMVPQVPMNYAQTTYAYQ) is the DAZ domain.

Belongs to the RRM DAZ family. In terms of tissue distribution, testis and ovary specific. In ovary, it is localized in the cortex of oocytes. At the onset of embryogenesis, maternal product is located at the vegetal pole, before migrating toward blastomeres through cytoplasmic streams as early embryogenesis proceededs.

It is found in the cytoplasm. Functionally, RNA-binding protein involved in gametogenesis in both males and females. Acts by binding to the 3'-UTR of mRNA, specifically recognizing GUU triplets, and promoting the translation of key transcripts. Establishes oocyte polarity through interaction with Bucky ball (BUC). Interacts with Bucky ball (BUC) mRNA to mediate Balbiani body formation and oocyte polarity during early oogenesis. The protein is Deleted in azoospermia-like (dazl) of Danio rerio (Zebrafish).